The primary structure comprises 87 residues: U3-theraphotoxin-Hhn1a 2 (87 aa).

The N-terminal stretch at Met1–Ala24 is a signal peptide. Positions Ser25 to Arg52 are excised as a propeptide. Disulfide bonds link Cys54-Cys67, Cys61-Cys72, and Cys66-Cys79.

The protein belongs to the neurotoxin 10 (Hwtx-1) family. 51 (Hntx-8) subfamily. Hntx-8 sub-subfamily. As to expression, expressed by the venom gland.

Its subcellular location is the secreted. Its function is as follows. Ion channel inhibitor. This Cyriopagopus hainanus (Chinese bird spider) protein is U3-theraphotoxin-Hhn1a 2.